A 393-amino-acid polypeptide reads, in one-letter code: Beta-1,3-galactosyltransferase 7 (393 aa).

Residues 9–29 (VISLKWVPFLCISFFALGAIF) form a helical; Signal-anchor for type II membrane protein membrane-spanning segment. The segment at 89-112 (SLDKSVSTLSSTRSSQEMVDGSET) is disordered. Residues 93 to 103 (SVSTLSSTRSS) show a composition bias toward low complexity.

It belongs to the glycosyltransferase 31 family. It depends on Mn(2+) as a cofactor. In terms of tissue distribution, expressed in leaves, stems, flowers and siliques.

The protein localises to the golgi apparatus membrane. It participates in protein modification; protein glycosylation. In terms of biological role, beta-1,3-galactosyltransferase that transfers galactose from UDP-galactose to substrates with a terminal glycosyl residue. The sequence is that of Beta-1,3-galactosyltransferase 7 (B3GALT7) from Arabidopsis thaliana (Mouse-ear cress).